The sequence spans 84 residues: Exodeoxyribonuclease 7 small subunit (84 aa).

The protein belongs to the XseB family. Heterooligomer composed of large and small subunits.

Its subcellular location is the cytoplasm. The enzyme catalyses Exonucleolytic cleavage in either 5'- to 3'- or 3'- to 5'-direction to yield nucleoside 5'-phosphates.. In terms of biological role, bidirectionally degrades single-stranded DNA into large acid-insoluble oligonucleotides, which are then degraded further into small acid-soluble oligonucleotides. The protein is Exodeoxyribonuclease 7 small subunit of Yersinia enterocolitica serotype O:8 / biotype 1B (strain NCTC 13174 / 8081).